We begin with the raw amino-acid sequence, 193 residues long: Acyl carrier protein phosphodiesterase (193 aa).

Belongs to the AcpH family.

It catalyses the reaction holo-[ACP] + H2O = apo-[ACP] + (R)-4'-phosphopantetheine + H(+). Its function is as follows. Converts holo-ACP to apo-ACP by hydrolytic cleavage of the phosphopantetheine prosthetic group from ACP. The chain is Acyl carrier protein phosphodiesterase from Escherichia coli O157:H7.